Here is an 875-residue protein sequence, read N- to C-terminus: Phosphoenolpyruvate carboxylase (875 aa).

Catalysis depends on residues histidine 137 and lysine 542.

The protein belongs to the PEPCase type 1 family. Mg(2+) is required as a cofactor.

It catalyses the reaction oxaloacetate + phosphate = phosphoenolpyruvate + hydrogencarbonate. Functionally, forms oxaloacetate, a four-carbon dicarboxylic acid source for the tricarboxylic acid cycle. In Pseudomonas entomophila (strain L48), this protein is Phosphoenolpyruvate carboxylase.